The following is a 435-amino-acid chain: CUB and peptidase domain-containing protein 1 (435 aa).

The signal sequence occupies residues 1–16 (SGFHLSFSFFRRAVCG). Positions 25 to 261 (IVGGTVAPIN…LKSWITGKIS (237 aa)) constitute a Peptidase S1 domain. A disulfide bridge links Cys-50 with Cys-66. Catalysis depends on charge relay system residues His-65 and Asp-116. 4 disulfides stabilise this stretch: Cys-151/Cys-218, Cys-182/Cys-197, Cys-208/Cys-237, and Cys-322/Cys-341. Ser-212 acts as the Charge relay system in catalysis. The region spanning 256 to 378 (ITGKISRSPA…SGFHLSFSFF (123 aa)) is the CUB domain.

Belongs to the peptidase S1 family. Component of the acid-insoluble organic matrix of the aragonitic skeleton (at protein level).

It is found in the secreted. The sequence is that of CUB and peptidase domain-containing protein 1 from Acropora millepora (Staghorn coral).